The chain runs to 506 residues: MQVKVRYAPSPTGFQHIGGVRTALFNYLFARSKGGKFVLRIEDTDRTRYSEEYEQNLYDTLEWLGLEWDEGGPKGGPCAPYIQSQRFDIYRKYAQELVDKGFAYYCFCDSERLDRIRKIQTMNKMPPGYDRACRNLTDEEIKAKMDEGIPYVIRLKVPLEGSTKFTDALLGDIEWKNEDINPDQILLKSDGFPTYHLANIVDDHLMGITHVMRAQEWLPSTPMHVIMYKAFGWEPPQFCHLPMVMGNDGQKLSKRHGATSCNEFRNKGYLKEAIINYVAMLGCSYEDGRDMYSLSDLEKLFDIKHLNKAPAVFDYKKLEWFNGQYMREKTDEELFALTWPYIANSGLFGKINEEELKKAGCRFENQTYLKPTQEQKEILMKVMPLVKERLHLLSEITEMVRFLFEEPAVPPAEEIIPKKLDAETTKKVLQKAIEVMPKILGLDDHAGGEVFRAEADAMGIKMGDFMMPVRMTVTGSRISPPLVGSIQILGIEKAIKRIEKAIAERF.

The 'HIGH' region motif lies at 9–19 (PSPTGFQHIGG). Residues 251–255 (KLSKR) carry the 'KMSKS' region motif. Lys-254 contacts ATP.

Belongs to the class-I aminoacyl-tRNA synthetase family. Glutamate--tRNA ligase type 1 subfamily. In terms of assembly, monomer.

It is found in the cytoplasm. The catalysed reaction is tRNA(Glu) + L-glutamate + ATP = L-glutamyl-tRNA(Glu) + AMP + diphosphate. Catalyzes the attachment of glutamate to tRNA(Glu) in a two-step reaction: glutamate is first activated by ATP to form Glu-AMP and then transferred to the acceptor end of tRNA(Glu). The chain is Glutamate--tRNA ligase from Treponema denticola (strain ATCC 35405 / DSM 14222 / CIP 103919 / JCM 8153 / KCTC 15104).